The sequence spans 126 residues: Protein ApaG (126 aa).

One can recognise an ApaG domain in the interval 2 to 126 (RRKPYELKVE…FSLAIPRRLH (125 aa)).

The protein is Protein ApaG of Methylococcus capsulatus (strain ATCC 33009 / NCIMB 11132 / Bath).